The primary structure comprises 278 residues: Large ribosomal subunit protein uL2 (278 aa).

The tract at residues Met-226–Gly-278 is disordered.

It belongs to the universal ribosomal protein uL2 family. Part of the 50S ribosomal subunit. Forms a bridge to the 30S subunit in the 70S ribosome.

Functionally, one of the primary rRNA binding proteins. Required for association of the 30S and 50S subunits to form the 70S ribosome, for tRNA binding and peptide bond formation. It has been suggested to have peptidyltransferase activity; this is somewhat controversial. Makes several contacts with the 16S rRNA in the 70S ribosome. This chain is Large ribosomal subunit protein uL2, found in Nitrosomonas europaea (strain ATCC 19718 / CIP 103999 / KCTC 2705 / NBRC 14298).